A 145-amino-acid polypeptide reads, in one-letter code: 3-hydroxyacyl-[acyl-carrier-protein] dehydratase FabZ (145 aa).

Residue His-49 is part of the active site.

Belongs to the thioester dehydratase family. FabZ subfamily.

The protein resides in the cytoplasm. It carries out the reaction a (3R)-hydroxyacyl-[ACP] = a (2E)-enoyl-[ACP] + H2O. In terms of biological role, involved in unsaturated fatty acids biosynthesis. Catalyzes the dehydration of short chain beta-hydroxyacyl-ACPs and long chain saturated and unsaturated beta-hydroxyacyl-ACPs. The chain is 3-hydroxyacyl-[acyl-carrier-protein] dehydratase FabZ from Rickettsia bellii (strain RML369-C).